Here is a 425-residue protein sequence, read N- to C-terminus: Dihydroorotase (425 aa).

The Zn(2+) site is built by His56 and His58. Substrate is bound by residues 58–60 and Asn90; that span reads HYR. The Zn(2+) site is built by Asp148, His175, and His228. Asn274 provides a ligand contact to substrate. Zn(2+) is bound at residue Asp301. Asp301 is a catalytic residue. Substrate is bound by residues His305 and 319-320; that span reads FG.

It belongs to the metallo-dependent hydrolases superfamily. DHOase family. Class I DHOase subfamily. The cofactor is Zn(2+).

The enzyme catalyses (S)-dihydroorotate + H2O = N-carbamoyl-L-aspartate + H(+). It functions in the pathway pyrimidine metabolism; UMP biosynthesis via de novo pathway; (S)-dihydroorotate from bicarbonate: step 3/3. Its function is as follows. Catalyzes the reversible cyclization of carbamoyl aspartate to dihydroorotate. In Lactobacillus delbrueckii subsp. bulgaricus (strain ATCC 11842 / DSM 20081 / BCRC 10696 / JCM 1002 / NBRC 13953 / NCIMB 11778 / NCTC 12712 / WDCM 00102 / Lb 14), this protein is Dihydroorotase.